Reading from the N-terminus, the 169-residue chain is Holo-[acyl-carrier-protein] synthase (169 aa).

Mg(2+) is bound by residues Asp-8 and Glu-50.

The protein belongs to the P-Pant transferase superfamily. AcpS family. It depends on Mg(2+) as a cofactor.

The protein resides in the cytoplasm. It catalyses the reaction apo-[ACP] + CoA = holo-[ACP] + adenosine 3',5'-bisphosphate + H(+). In terms of biological role, transfers the 4'-phosphopantetheine moiety from coenzyme A to a Ser of acyl-carrier-protein. This chain is Holo-[acyl-carrier-protein] synthase, found in Thermotoga maritima (strain ATCC 43589 / DSM 3109 / JCM 10099 / NBRC 100826 / MSB8).